Here is a 163-residue protein sequence, read N- to C-terminus: Cytochrome b6-f complex subunit 4 (163 aa).

Helical transmembrane passes span 36–56 (LLYI…GLAV), 95–115 (LLGV…PFLE), and 131–151 (TVFL…TLPI).

It belongs to the cytochrome b family. PetD subfamily. In terms of assembly, the 4 large subunits of the cytochrome b6-f complex are cytochrome b6, subunit IV (17 kDa polypeptide, petD), cytochrome f and the Rieske protein, while the 4 small subunits are petG, petL, petM and petN. The complex functions as a dimer.

Its subcellular location is the plastid. It localises to the chloroplast thylakoid membrane. Component of the cytochrome b6-f complex, which mediates electron transfer between photosystem II (PSII) and photosystem I (PSI), cyclic electron flow around PSI, and state transitions. This Pelargonium hortorum (Common geranium) protein is Cytochrome b6-f complex subunit 4.